Consider the following 116-residue polypeptide: Translation initiation factor 1A (116 aa).

Positions 1-25 (MRCLSKKHQKQGDEHGGEIPLPNPD) are disordered. One can recognise an S1-like domain in the interval 17–91 (GEIPLPNPDE…EKGEVVYKYG (75 aa)).

Belongs to the eIF-1A family.

In terms of biological role, seems to be required for maximal rate of protein biosynthesis. Enhances ribosome dissociation into subunits and stabilizes the binding of the initiator Met-tRNA(I) to 40 S ribosomal subunits. The sequence is that of Translation initiation factor 1A (eIF1A) from Desulfurococcus amylolyticus (strain DSM 18924 / JCM 16383 / VKM B-2413 / 1221n) (Desulfurococcus kamchatkensis).